The following is a 176-amino-acid chain: CASP-like protein 5A1 (176 aa).

Residues 1 to 35 (MNPSHPAVHPVEAPPTDVHHAPRVRMKDYQGMPGT) are Cytoplasmic-facing. A helical transmembrane segment spans residues 36–56 (LGGLALRLGQFCFAVVAFSIM). At 57–67 (LSTDDFSTVTA) the chain is on the extracellular side. A helical transmembrane segment spans residues 68–88 (FCYLVAATVLQCLWSLALAVI). Topologically, residues 89–102 (DGYALLVKRSLRNS) are cytoplasmic. The chain crosses the membrane as a helical span at residues 103–123 (LVVSLFVVGDGVTATLTFAAA). The Extracellular portion of the chain corresponds to 124 to 152 (CASAGITVLIGNDLRECDQNHCGKYETAT). A helical transmembrane segment spans residues 153-173 (AMAFLSWFMVSPSFLLTFWLL). Over 174–176 (ASR) the chain is Cytoplasmic.

It belongs to the Casparian strip membrane proteins (CASP) family. As to quaternary structure, homodimer and heterodimers.

It localises to the cell membrane. The polypeptide is CASP-like protein 5A1 (Ginkgo biloba (Ginkgo)).